The sequence spans 23 residues: Unknown protein NF005 from 2D-PAGE (23 aa).

The segment at 1–23 (AGKARKQLSKNEDTKLKEQYIXD) is disordered. The segment covering 9-23 (SKNEDTKLKEQYIXD) has biased composition (basic and acidic residues).

The polypeptide is Unknown protein NF005 from 2D-PAGE (Naegleria fowleri (Brain eating amoeba)).